The chain runs to 439 residues: Glutamate--tRNA ligase 2 (439 aa).

Residues 6–16 (PSPTGDMHIGN) carry the 'HIGH' region motif. Residues 232 to 236 (KMSKR) carry the 'KMSKS' region motif. Lys-235 contributes to the ATP binding site.

This sequence belongs to the class-I aminoacyl-tRNA synthetase family. Glutamate--tRNA ligase type 1 subfamily. In terms of assembly, monomer.

It localises to the cytoplasm. The catalysed reaction is tRNA(Glu) + L-glutamate + ATP = L-glutamyl-tRNA(Glu) + AMP + diphosphate. Its function is as follows. Catalyzes the attachment of glutamate to tRNA(Glu) in a two-step reaction: glutamate is first activated by ATP to form Glu-AMP and then transferred to the acceptor end of tRNA(Glu). This chain is Glutamate--tRNA ligase 2, found in Helicobacter pylori (strain Shi470).